A 602-amino-acid polypeptide reads, in one-letter code: MSESERSEAFGTPDAAEVERLRREVAALREQLEGSAARGPGDSGRLRDLNQLEARIDSLNARNAKLMDTLKEARQQLLALREEVDRLGQPPSGYGVLLAVQTDETVDVFTSGRKMRVTCSPNIETSELRRGQTVRLNEALTVVEAGNFESVGEISTLREVLDDGHRALVVGHADEERIVWLADPLIAPDLSEVSEDADGADLKPRKLRPGDSLLVDTKAGYAFERIPKAEVEDLVLEEVPDVSYSDIGGLARQIEQIRDAVELPFLHKDLYQEYSLRPPKGVLLYGPPGCGKTLIAKAVANSLAKKMAELRGDDSREAKSYFLNIKGPELLNKFVGETERHIRLIFQRAREKASDGTPVIVFFDEMDSIFRTRGTGVSSDVETTVVPQLLSEIDGVEGLENVIVIGASNREDMIDPAILRPGRLDVKIKIERPDAESAQDIFSKYLTVDLPVHSEDLAEFGGDRGLTVKAMIEKVVDRMYAEIDDNRFLEVTYANGDKEVMYFKDFNSGAMIQNVVDRAKKNAIKSVLETGQKGLRIQHLLDSIVDEFAENEDLPNTTNPDDWARISGKKGERIVYIRTLVTGKSSSASRAIDTESSLGQYL.

The stretch at 13 to 89 forms a coiled coil; sequence PDAAEVERLR…LREEVDRLGQ (77 aa). 289–294 serves as a coordination point for ATP; sequence GCGKTL. A docks into pockets in the proteasome alpha-ring region spans residues 601–602; it reads YL.

Belongs to the AAA ATPase family. Homohexamer. Assembles into a hexameric ring structure that caps the 20S proteasome core. Strongly interacts with the prokaryotic ubiquitin-like protein Pup through a hydrophobic interface; the interacting region of ARC lies in its N-terminal coiled-coil domain. There is one Pup binding site per ARC hexamer ring. Upon ATP-binding, the C-terminus of ARC interacts with the alpha-rings of the proteasome core, possibly by binding to the intersubunit pockets.

It functions in the pathway protein degradation; proteasomal Pup-dependent pathway. Its function is as follows. ATPase which is responsible for recognizing, binding, unfolding and translocation of pupylated proteins into the bacterial 20S proteasome core particle. May be essential for opening the gate of the 20S proteasome via an interaction with its C-terminus, thereby allowing substrate entry and access to the site of proteolysis. Thus, the C-termini of the proteasomal ATPase may function like a 'key in a lock' to induce gate opening and therefore regulate proteolysis. In Mycobacteroides abscessus (strain ATCC 19977 / DSM 44196 / CCUG 20993 / CIP 104536 / JCM 13569 / NCTC 13031 / TMC 1543 / L948) (Mycobacterium abscessus), this protein is Proteasome-associated ATPase.